Consider the following 113-residue polypeptide: Endoribonuclease SymE (113 aa).

The region spanning 29–74 is the SpoVT-AbrB domain; that stretch reads SRYPDYSRIPAITLKGQWLEAAGFATGTAVDVKVMEGCIVLTAQPA.

It belongs to the SymE family.

The protein resides in the cytoplasm. Functionally, involved in the degradation and recycling of damaged RNA. It is itself a target for degradation by the ATP-dependent protease Lon. This Shigella flexneri serotype 5b (strain 8401) protein is Endoribonuclease SymE.